The chain runs to 243 residues: MRPLLVLLLLGLAAGSPPLDDNKIPSLCPGHPGLPGTPGHHGSQGLPGRDGRDGRDGAPGAPGEKGEGGRPGLPGPRGDPGPRGEAGPAGPTGPAGECSVPPRSAFSAKRSESRVPPPSDAPLPFDRVLVNEQGHYDAVTGKFTCQVPGVYYFAVHATVYRASLQFDLVKNGESIASFFQFFGGWPKPASLSGGAMVRLEPEDQVWVQVGVGDYIGIYASIKTDSTFSGFLVYSDWHSSPVFA.

Residues 1–15 (MRPLLVLLLLGLAAG) form the signal peptide. A disordered region spans residues 15–125 (GSPPLDDNKI…PPPSDAPLPF (111 aa)). A Collagen-like domain is found at 30–95 (GHPGLPGTPG…AGPAGPTGPA (66 aa)). The span at 83–96 (RGEAGPAGPTGPAG) shows a compositional bias: low complexity. In terms of domain architecture, C1q spans 99–238 (SVPPRSAFSA…GFLVYSDWHS (140 aa)).

May interact with ERFE. Homotrimer (via collagen-like domain). May form higher order oligomers by supercoiling of the trimers.

The protein resides in the secreted. This chain is Complement C1q tumor necrosis factor-related protein 5 (C1QTNF5), found in Homo sapiens (Human).